Reading from the N-terminus, the 265-residue chain is H-2 class II histocompatibility antigen, A-D beta chain (265 aa).

An N-terminal signal peptide occupies residues 1–27 (MALQIPSLLLSAAVVVLMVLSSPRTEG). Positions 28-122 (GNSERHFVVQ…PETSTSLRRL (95 aa)) are beta-1. The Extracellular segment spans residues 28–226 (GNSERHFVVQ…RAQSESARSK (199 aa)). Intrachain disulfides connect C42–C106 and C145–C201. N46 carries N-linked (GlcNAc...) asparagine glycosylation. The segment at 123-216 (EQPNVAISLS…SLKSPITVEW (94 aa)) is beta-2. Positions 125 to 213 (PNVAISLSRT…EHPSLKSPIT (89 aa)) constitute an Ig-like C1-type domain. Positions 217–226 (RAQSESARSK) are connecting peptide. A helical transmembrane segment spans residues 227–247 (MLSGIGGCVLGVIFLGLGLFI). Topologically, residues 248 to 265 (RHRSQKGPRGPPPAGLLQ) are cytoplasmic.

The protein belongs to the MHC class II family. In terms of processing, ubiquitinated in immature dendritic cells leading to down-regulation of MHC class II.

It is found in the membrane. This chain is H-2 class II histocompatibility antigen, A-D beta chain (H2-Ab1), found in Mus musculus (Mouse).